Reading from the N-terminus, the 352-residue chain is MVFRIASSPYTHNQRQTSRIMLLVLIAALPGIAAQTWFFGWGTLFQIVLAAITALVAEAIVLRLRKQSVASHLQDYSALLTGLLLAVSIPPLAPWWMVVLGTGFAIIIAKQLYGGLGQNPFNPAMIGYVVLLISFPVQMTSWLPPYEIAATTPDMLDTLRMIFSGHTASGGDMTLLRIGIDGISQATPLDTFKTSLRAGHSVEQIMQYPIYSGALAGVGWQWVNLAWLVGGVFLLWQKAIRWHIPVSFLLTLALCAALGWLFSPATLASPQLHLLSGATMLGAFFILTDPVTASTTNRGRLIFGALAGVLVWLIRSFGGYPDGVAFAVLLANITVPLIDYYTRPRVYGHRKG.

Transmembrane regions (helical) follow at residues 20–40, 42–62, 69–91, and 123–143; these read IMLL…WFFG, GTLF…AIVL, VASH…SIPP, and PAMI…TSWL. Threonine 187 carries the FMN phosphoryl threonine modification. 5 consecutive transmembrane segments (helical) span residues 215 to 235, 242 to 262, 267 to 287, 301 to 321, and 322 to 342; these read LAGV…VFLL, WHIP…GWLF, LASP…FFIL, LIFG…GGYP, and DGVA…DYYT.

The protein belongs to the NqrB/RnfD family. The complex is composed of six subunits: RsxA, RsxB, RsxC, RsxD, RsxE and RsxG. It depends on FMN as a cofactor.

The protein localises to the cell inner membrane. Its function is as follows. Part of a membrane-bound complex that couples electron transfer with translocation of ions across the membrane. Required to maintain the reduced state of SoxR. The protein is Ion-translocating oxidoreductase complex subunit D of Salmonella paratyphi B (strain ATCC BAA-1250 / SPB7).